The following is a 119-amino-acid chain: Autophagy-related protein 8h (119 aa).

Gly-119 is lipidated: Phosphatidylethanolamine amidated glycine.

Belongs to the ATG8 family. As to quaternary structure, interacts with ATG4. Interacts with ATI1. In terms of processing, gly-119 forms then a thioester bond with the 'Cys-558' of ATG7 (E1-like activating enzyme) before being transferred to the 'Cys-258' of ATG3 (the specific E2 conjugating enzyme), in order to be finally amidated with phosphatidylethanolamine. This lipid modification anchors ATG8 to autophagosomes. As to expression, constitutively expressed.

It localises to the cytoplasmic vesicle. The protein resides in the autophagosome membrane. Its subcellular location is the vacuole membrane. The protein localises to the cytoplasm. It is found in the cytoskeleton. In terms of biological role, ubiquitin-like modifier involved in autophagosomes formation. May mediate the delivery of the autophagosomes to the vacuole via the microtubule cytoskeleton. The chain is Autophagy-related protein 8h (ATG8H) from Arabidopsis thaliana (Mouse-ear cress).